Here is a 713-residue protein sequence, read N- to C-terminus: F-box/WD repeat-containing protein 7 (713 aa).

Residues 1 to 150 form a disordered region; it reads MNQELLSVGS…DEHTHNSNVT (150 aa). S26 bears the Phosphoserine mark. Basic and acidic residues predominate over residues 46–55; that stretch reads RHQEEEHTAR. The segment covering 69–84 has biased composition (polar residues); it reads QNDSQQGQVEENNNRF. Residues 87–135 are compositionally biased toward acidic residues; that stretch reads VDEDSSGNQEEQEEDEEHAGEQEEEEEEEEEEEEEEEMDQESDDFDQSD. Residues 94-136 are a coiled coil; sequence NQEEQEEDEEHAGEQEEEEEEEEEEEEEEEMDQESDDFDQSDD. Over residues 136 to 145 the composition is skewed to basic and acidic residues; it reads DSSREDEHTH. At T211 the chain carries Phosphothreonine. A Phosphoserine modification is found at S233. The 47-residue stretch at 284-330 folds into the F-box domain; it reads RDFISLLPKELALYVLSFLEPKDLLQAAQTCRYWRILAEDNLLWREK. WD repeat units follow at residues 384–424, 426–462, 465–504, 506–542, 545–584, 586–624, and 628–665; these read GHDD…RTLV, HTGG…CIHT, GHTS…HVLM, HVAA…CLHT, GHTN…HTLT, HQSL…QTLQ, and KHQS…FIRN.

In terms of assembly, homodimer; homodimerization plays a role in substrate binding and/or ubiquitination and degradation. Component of the SCF(FBXW7) complex consisting of CUL1, RBX1, SKP1 and FBXW7. Interacts (via F-box domain) with SKP1. Interacts (via F-box domain) with pseudophosphatase STYX; the interaction is direct and prevents FBXW7 interaction with SKP1. Interacts with cyclin-E (CCNE1 or CCNE2). Interacts with PSEN1. Forms a trimeric complex with NOTCH1 and SGK1. Interacts with NOTCH1 intracellular domain/NICD and NOTCH4 intracellular domain/NICD. Interacts with NOTCH2 intracellular domain (N2ICD). Interacts with MYC (when phosphorylated). Interacts with USP28, counteracting ubiquitination of MYC. Interacts (when phosphorylated at Thr-211) with PIN1, disrupting FBXW7 dimerization and promoting FBXW7 autoubiquitination and degradation. Interacts with UBE2QL1. Interacts with FAM83D; promotes FBXW7 degradation. Interacts with MYCN; FBXW7 competes with AURKA for binding to unphosphorylated MYCN but not for binding to phosphorylated MYCN. Interacts with JUN. Found in a complex with JUN and PRR7. Interacts with JUN and PRR7; the interaction inhibits ubiquitination-mediated JUN degradation, promoting its phosphorylation and transcriptional activity. Interacts with NFE2L1. Interacts with NR1D1. Interacts with RICTOR; mediates RICTOR ubiquitination and degradation. Post-translationally, phosphorylation at Thr-211 promotes interaction with PIN1, leading to disrupt FBXW7 dimerization and promoting FBXW7 autoubiquitination and degradation. Phosphorylated by ATM at Ser-26 in response to DNA damage, promoting recruitment to DNA damage sites and 'Lys-63'-linked ubiquitination of phosphorylated XRCC4. Ubiquitinated: autoubiquitinates following phosphorylation at Thr-211 and subsequent interaction with PIN1. Ubiquitination leads to its degradation.

It is found in the nucleus. The protein localises to the nucleoplasm. The protein resides in the chromosome. Its pathway is protein modification; protein ubiquitination. Its function is as follows. Substrate recognition component of a SCF (SKP1-CUL1-F-box protein) E3 ubiquitin-protein ligase complex which mediates the ubiquitination and subsequent proteasomal degradation of target proteins. Recognizes and binds phosphorylated sites/phosphodegrons within target proteins and thereafter brings them to the SCF complex for ubiquitination. Identified substrates include cyclin-E (CCNE1 or CCNE2), JUN, MYC, NOTCH1 released notch intracellular domain (NICD), NOTCH2, MCL1, MLST8, RICTOR and probably PSEN1. Acts as a negative regulator of JNK signaling by binding to phosphorylated JUN and promoting its ubiquitination and subsequent degradation. SCF(FBXW7) complex mediates the ubiquitination and subsequent degradation of NFE2L1. Involved in bone homeostasis and negative regulation of osteoclast differentiation. Regulates the amplitude of the cyclic expression of hepatic core clock genes and genes involved in lipid and glucose metabolism via ubiquitination and proteasomal degradation of their transcriptional repressor NR1D1; CDK1-dependent phosphorylation of NR1D1 is necessary for SCF(FBXW7)-mediated ubiquitination. Also able to promote 'Lys-63'-linked ubiquitination in response to DNA damage. The SCF(FBXW7) complex facilitates double-strand break repair following phosphorylation by ATM: phosphorylation promotes localization to sites of double-strand breaks and 'Lys-63'-linked ubiquitination of phosphorylated XRCC4, enhancing DNA non-homologous end joining. The sequence is that of F-box/WD repeat-containing protein 7 from Rattus norvegicus (Rat).